The following is a 218-amino-acid chain: Pyridoxine/pyridoxamine 5'-phosphate oxidase (218 aa).

Substrate-binding positions include 12-15 (RLSY) and Arg70. FMN-binding positions include 65-70 (RTVLLR), 80-81 (YT), Lys87, and Gln109. Substrate contacts are provided by Tyr127, Arg131, and Ser135. FMN is bound by residues 145–146 (QS) and Trp191. Substrate is bound at residue 197–199 (RLH). Arg201 is a binding site for FMN.

Belongs to the pyridoxamine 5'-phosphate oxidase family. As to quaternary structure, homodimer. The cofactor is FMN.

It catalyses the reaction pyridoxamine 5'-phosphate + O2 + H2O = pyridoxal 5'-phosphate + H2O2 + NH4(+). The catalysed reaction is pyridoxine 5'-phosphate + O2 = pyridoxal 5'-phosphate + H2O2. It participates in cofactor metabolism; pyridoxal 5'-phosphate salvage; pyridoxal 5'-phosphate from pyridoxamine 5'-phosphate: step 1/1. It functions in the pathway cofactor metabolism; pyridoxal 5'-phosphate salvage; pyridoxal 5'-phosphate from pyridoxine 5'-phosphate: step 1/1. Catalyzes the oxidation of either pyridoxine 5'-phosphate (PNP) or pyridoxamine 5'-phosphate (PMP) into pyridoxal 5'-phosphate (PLP). This is Pyridoxine/pyridoxamine 5'-phosphate oxidase from Acinetobacter baumannii (strain AB0057).